The sequence spans 296 residues: Ribosomal protein L11 methyltransferase (296 aa).

4 residues coordinate S-adenosyl-L-methionine: Thr145, Gly166, Asp188, and Asn230.

The protein belongs to the methyltransferase superfamily. PrmA family.

The protein resides in the cytoplasm. It catalyses the reaction L-lysyl-[protein] + 3 S-adenosyl-L-methionine = N(6),N(6),N(6)-trimethyl-L-lysyl-[protein] + 3 S-adenosyl-L-homocysteine + 3 H(+). Functionally, methylates ribosomal protein L11. The protein is Ribosomal protein L11 methyltransferase of Histophilus somni (strain 2336) (Haemophilus somnus).